Reading from the N-terminus, the 1002-residue chain is Isoleucine--tRNA ligase, mitochondrial (1002 aa).

The 'HIGH' region signature appears at 94 to 104; sequence PYANGELHLGH. The short motif at 668–672 is the 'KMSKS' region element; sequence KMSKS. Lys671 contributes to the ATP binding site.

This sequence belongs to the class-I aminoacyl-tRNA synthetase family.

It localises to the mitochondrion matrix. It carries out the reaction tRNA(Ile) + L-isoleucine + ATP = L-isoleucyl-tRNA(Ile) + AMP + diphosphate. The protein is Isoleucine--tRNA ligase, mitochondrial (ISM1) of Saccharomyces cerevisiae (strain ATCC 204508 / S288c) (Baker's yeast).